The following is a 687-amino-acid chain: MKQMSYVTRWLYSTSHKDIGMTYLGFGMLSAMMGTGMSVMMRMELSNGNSQFFHGNNQAFNVMMSGHALLMMFFFIMPVWMGAFGNFFLPMLMGAADMAFARLNNISFWCLPPALVCMVCSVLMEQGAGTGFTTYPPLSSMSAHSGPSVDLAMFAMHLTSMSSLLGAMNFMVTVLNMRTMGLHMVNMPLFAWAMFLTAMLLLLSLPVLTAAVTLLLMDRNFNTGFYEVGAGGDPVTYEHLFWFFGHPEVYILMMPGFGVMSHMVSTYSKKPMFGEMGMLYAMGSIGFLGFLVWSHHMFVVGLDIDSRAYFTSATMVIAVPTGIKIFSWLATIYGGELRLGVPMLFALGFLFLFTMGGLTGVMTSNASMDVAFHDRIFIYYVSFFLYTLYNMYNNYTNNNTAHKGRHCANASYNNDINNLVSFMDKNEYIKMFWVGLMDGDGSMQVNHWRKKNLQYRLIMKTSNLESNYNMLMLMAKVMGGTVRISKKKDNVMWVVDSKESIKDMMKMFDKYPLLTSRKMCQINFMKKCMKLNYMPAEGGYPREAGTDWYLLNRNYKYNDQLNMINTFNLKLKNKSFMNALPEGHGMHHMVKHSEYFKCWLSGFMEAEGCFSIRLNKSNSFSMGQNDDFYLMEEIKQFFNATNSVRNSYKNFYCLEIYKRIMLNNIITHCSNYPLLGEKKESLMKFLK.

The interval 1 to 374 is COX1 exons 1 to 3 encoded; it reads MKQMSYVTRW…NASMDVAFHD (374 aa). Transmembrane regions (helical) follow at residues 19–39, 69–89, 103–123, 152–172, 188–208, 240–260, 273–293, 315–335, 341–361, and 376–396; these read IGMT…GMSV, LLMM…NFFL, LNNI…CSVL, AMFA…NFMV, PLFA…LPVL, LFWF…FGVM, FGEM…FLVW, MVIA…IYGG, VPML…LTGV, and IFIY…NNYT. The segment at 375–687 is COX1 intron 3 encoded; it reads RIFIYYVSFF…KKESLMKFLK (313 aa).

This sequence in the C-terminal section; belongs to the LAGLIDADG endonuclease family. In the N-terminal section; belongs to the heme-copper respiratory oxidase family. Post-translationally, the mature protein may arise from proteolytic cleavage of an in-frame translation of COX1 exons 1 to 3 plus intron 3, containing the aI3 open reading frame.

Its subcellular location is the mitochondrion. The protein resides in the membrane. Mitochondrial DNA endonuclease involved in intron homing. The chain is Probable intron-encoded endonuclease aI3 (aI3) from Debaryomyces hansenii (strain ATCC 36239 / CBS 767 / BCRC 21394 / JCM 1990 / NBRC 0083 / IGC 2968) (Yeast).